Consider the following 1408-residue polypeptide: DNA-directed RNA polymerase subunit beta' (1408 aa).

4 residues coordinate Zn(2+): Cys-70, Cys-72, Cys-85, and Cys-88. Mg(2+) is bound by residues Asp-460, Asp-462, and Asp-464. 4 residues coordinate Zn(2+): Cys-814, Cys-888, Cys-895, and Cys-898.

It belongs to the RNA polymerase beta' chain family. In terms of assembly, the RNAP catalytic core consists of 2 alpha, 1 beta, 1 beta' and 1 omega subunit. When a sigma factor is associated with the core the holoenzyme is formed, which can initiate transcription. Mg(2+) serves as cofactor. It depends on Zn(2+) as a cofactor.

The catalysed reaction is RNA(n) + a ribonucleoside 5'-triphosphate = RNA(n+1) + diphosphate. Its function is as follows. DNA-dependent RNA polymerase catalyzes the transcription of DNA into RNA using the four ribonucleoside triphosphates as substrates. The polypeptide is DNA-directed RNA polymerase subunit beta' (Serratia proteamaculans (strain 568)).